Reading from the N-terminus, the 136-residue chain is ATP synthase epsilon chain, chloroplastic (136 aa).

Belongs to the ATPase epsilon chain family. As to quaternary structure, F-type ATPases have 2 components, CF(1) - the catalytic core - and CF(0) - the membrane proton channel. CF(1) has five subunits: alpha(3), beta(3), gamma(1), delta(1), epsilon(1). CF(0) has three main subunits: a, b and c.

It localises to the plastid. Its subcellular location is the chloroplast thylakoid membrane. In terms of biological role, produces ATP from ADP in the presence of a proton gradient across the membrane. The chain is ATP synthase epsilon chain, chloroplastic from Tetradesmus obliquus (Green alga).